The primary structure comprises 388 residues: Granulocyte-macrophage colony-stimulating factor receptor subunit alpha (388 aa).

Residues 1 to 29 (MTSSHAMNITPLAQLALLFSTLLLPGTQA) form the signal peptide. The Extracellular portion of the chain corresponds to 30–327 (LLAPTTPDAG…PLEAEDTRVP (298 aa)). Asn-43, Asn-63, Asn-106, Asn-132, Asn-165, and Asn-237 each carry an N-linked (GlcNAc...) asparagine glycan. The region spanning 228–324 (PPRDVTASCN…PAHPLEAEDT (97 aa)) is the Fibronectin type-III domain. Positions 310–314 (WGEWS) match the WSXWS motif motif. Residues 328–348 (GALLYAVTACAVLLCALALGV) form a helical membrane-spanning segment. Over 349 to 388 (TCRRFEVTRRLFPPIPGIRDKVSDDVRVNPETLRKDLLQP) the chain is Cytoplasmic. The short motif at 359-367 (LFPPIPGIR) is the Box 1 motif element.

It belongs to the type I cytokine receptor family. Type 5 subfamily. As to quaternary structure, heterodimer of an alpha and a beta subunit. The beta subunit is common to the IL3, IL5 and GM-CSF receptors. The signaling GM-CSF receptor complex is a dodecamer of two head-to-head hexamers of two alpha, two beta, and two ligand subunits.

The protein localises to the membrane. Low affinity receptor for granulocyte-macrophage colony-stimulating factor. Transduces a signal that results in the proliferation, differentiation, and functional activation of hematopoietic cells. The protein is Granulocyte-macrophage colony-stimulating factor receptor subunit alpha (Csf2ra) of Mus musculus (Mouse).